Here is a 483-residue protein sequence, read N- to C-terminus: GDP-fucose protein O-fucosyltransferase 4 (483 aa).

M1 is a topological domain (cytoplasmic). A helical; Signal-anchor for type II membrane protein membrane pass occupies residues 2–21 (ALCLWLFLVLPICCWCQGAV). Residues 22–483 (DLGDSGVFQP…RARGLSNDSR (462 aa)) lie on the Lumenal side of the membrane. N-linked (GlcNAc...) asparagine glycans are attached at residues N151 and N303. An intrachain disulfide couples C374 to C377. Residues 387-425 (RKAHRKNPKQNQPPQPKMANSSHMGCPLPSPGYGPVENV) are disordered. N-linked (GlcNAc...) asparagine glycans are attached at residues N406, N428, N456, and N480.

It belongs to the glycosyltransferase 10 family.

It is found in the endoplasmic reticulum membrane. It carries out the reaction L-threonyl-[protein] + GDP-beta-L-fucose = 3-O-(alpha-L-fucosyl)-L-threonyl-[protein] + GDP + H(+). The catalysed reaction is L-seryl-[protein] + GDP-beta-L-fucose = 3-O-(alpha-L-fucosyl)-L-seryl-[protein] + GDP + H(+). The protein operates within protein modification; protein glycosylation. Functionally, protein O-fucosyltransferase that specifically catalyzes O-fucosylation of serine or threonine residues in EMI domains of target proteins. Attaches fucose through an O-glycosidic linkage. O-fucosylation of EMI domain-containing proteins may be required for facilitating protein folding and secretion. In Danio rerio (Zebrafish), this protein is GDP-fucose protein O-fucosyltransferase 4 (fut11).